A 450-amino-acid polypeptide reads, in one-letter code: MPVAGPLDIVSLDGEARGIGRLTNEDGTPGKVVFVEGALPGERVMYRSHRVKPSYEQAGVVNILRQSASRVTPQCKFFGVCGGCSMQHLDSRAQVAIKQRVLEDDLWHLAKLRPDVVFRPIAGPDWGYRYRARLTVRHVAAKGGVLVGFHERKSSYVADMTSCEVLPPHVSALLVPLRELVGRLSIVQRMPQIELAVGQDVTALVLRNLEPITAEDEAELRAFADHHNIQFWLQPKGPDTVYPFYPLDRTLTYTLPEFGITMPFKPTDFTQVNHQINRVLMSRALKLLDAQPGDRLLDLFCGIGNFTLPMATRAREVMGIEGSEALTTRALANAQHNGLHTKTSFACRNLFEVSADDVAALGKFDRWLIDPPREGALAVSKALAELSQSGGDAADLLPKRIIYVSCNPATLARDAGLLVHEAGYRLAGAGVVNMFPHTSHVESMAVFERD.

The TRAM domain maps to 1–62; sequence MPVAGPLDIV…PSYEQAGVVN (62 aa). Positions 75, 81, 84, and 163 each coordinate [4Fe-4S] cluster. Residues Gln271, Phe300, Asn305, Glu321, Asn349, and Asp370 each coordinate S-adenosyl-L-methionine. Residue Cys406 is the Nucleophile of the active site.

It belongs to the class I-like SAM-binding methyltransferase superfamily. RNA M5U methyltransferase family. RlmD subfamily.

The enzyme catalyses uridine(1939) in 23S rRNA + S-adenosyl-L-methionine = 5-methyluridine(1939) in 23S rRNA + S-adenosyl-L-homocysteine + H(+). Its function is as follows. Catalyzes the formation of 5-methyl-uridine at position 1939 (m5U1939) in 23S rRNA. This chain is 23S rRNA (uracil(1939)-C(5))-methyltransferase RlmD, found in Ralstonia pickettii (strain 12J).